Consider the following 279-residue polypeptide: Succinate dehydrogenase [ubiquinone] iron-sulfur subunit 1, mitochondrial (279 aa).

The N-terminal 28 residues, 1 to 28 (MASGLIGRLVGTKPSKLATAARLIPARW), are a transit peptide targeting the mitochondrion. One can recognise a 2Fe-2S ferredoxin-type domain in the interval 52-141 (FQIYRWNPDN…ETTITPLPHM (90 aa)). Residues Cys-102, Cys-107, and Cys-122 each contribute to the [2Fe-2S] cluster site. Residues 184–214 (DRAKLDGMYECILCACCSTSCPSYWWNPESY) enclose the 4Fe-4S ferredoxin-type domain. [4Fe-4S] cluster contacts are provided by Cys-194, Cys-197, and Cys-200. Cys-204 lines the [3Fe-4S] cluster pocket. Residue Trp-209 participates in a ubiquinone binding. Residues Cys-251 and Cys-257 each coordinate [3Fe-4S] cluster. Residue Cys-261 coordinates [4Fe-4S] cluster.

The protein belongs to the succinate dehydrogenase/fumarate reductase iron-sulfur protein family. Component of complex II composed of eight subunits in plants: four classical SDH subunits SDH1, SDH2, SDH3 and SDH4 (a flavoprotein (FP), an iron-sulfur protein (IP), and a cytochrome b composed of a large and a small subunit.), as well as four subunits unknown in mitochondria from bacteria and heterotrophic eukaryotes. Requires [2Fe-2S] cluster as cofactor. [3Fe-4S] cluster is required as a cofactor. It depends on [4Fe-4S] cluster as a cofactor. As to expression, ubiquitous. Preferentially expressed in flowers and inflorescences.

It is found in the mitochondrion inner membrane. It carries out the reaction a quinone + succinate = fumarate + a quinol. The protein operates within carbohydrate metabolism; tricarboxylic acid cycle; fumarate from succinate (eukaryal route): step 1/1. Functionally, iron-sulfur protein (IP) subunit of succinate dehydrogenase (SDH) that is involved in complex II of the mitochondrial electron transport chain and is responsible for transferring electrons from succinate to ubiquinone (coenzyme Q). This is Succinate dehydrogenase [ubiquinone] iron-sulfur subunit 1, mitochondrial (SDH2-1) from Arabidopsis thaliana (Mouse-ear cress).